We begin with the raw amino-acid sequence, 527 residues long: Catalase (527 aa).

At Ala-2 the chain carries N-acetylalanine. Phosphoserine is present on Ser-9. Position 13 is an N6-succinyllysine (Lys-13). Catalysis depends on residues His-75 and Asn-148. His-194, Ser-201, Arg-203, and Asn-213 together coordinate NADP(+). At Lys-221 the chain carries N6-succinyllysine. At Lys-233 the chain carries N6-acetyllysine. NADP(+) is bound by residues Lys-237, Trp-303, His-305, and Lys-306. Lys-306 carries the N6-acetyllysine; alternate modification. Residue Lys-306 is modified to N6-succinyllysine; alternate. Residue Tyr-358 participates in heme binding. Phosphoserine is present on residues Ser-417 and Ser-422. Position 480 is an N6-acetyllysine; alternate (Lys-480). Position 480 is an N6-succinyllysine; alternate (Lys-480). Lys-499 carries the post-translational modification N6-acetyllysine. At Thr-511 the chain carries Phosphothreonine. Phosphoserine occurs at positions 515 and 517. The Microbody targeting signal; atypical signature appears at 524–527; the sequence is KANL.

The protein belongs to the catalase family. As to quaternary structure, homotetramer. Interacts (via microbody targeting signal) with PEX5, monomeric form interacts with PEX5, leading to its translocation into peroxisomes. Requires heme as cofactor. It depends on NADP(+) as a cofactor.

Its subcellular location is the peroxisome matrix. The catalysed reaction is 2 H2O2 = O2 + 2 H2O. Its function is as follows. Catalyzes the degradation of hydrogen peroxide (H(2)O(2)) generated by peroxisomal oxidases to water and oxygen, thereby protecting cells from the toxic effects of hydrogen peroxide. Promotes growth of cells including T-cells, B-cells, myeloid leukemia cells, melanoma cells, mastocytoma cells and normal and transformed fibroblast cells. The chain is Catalase (CAT) from Pongo abelii (Sumatran orangutan).